The chain runs to 1028 residues: Golgin subfamily A member 2 (1028 aa).

The interval 1-112 (MADQNRQIKL…NRPLSSTESL (112 aa)) is disordered. Residues 40–60 (KGDQTDAPADRRSPENERVDV) show a composition bias toward basic and acidic residues. The segment covering 74 to 87 (NPASAINTDNSAPQ) has biased composition (polar residues). 5 coiled-coil regions span residues 162–200 (NTQLTSKLETLTKQSQELSDQLQKERKEFEQKFTKEQGA), 233–388 (ARQK…YAVQ), 414–690 (RDST…LLNG), 738–769 (LSRVEAERDEMSRRLEEERRIHQDTRQQLTAL), and 799–840 (HEAL…LSGE). A disordered region spans residues 259–280 (RTLSSVSTQQKQHERHNKELEK). The tract at residues 756–791 (RRIHQDTRQQLTALSHDHHHHHHHEPHSTCAETDGS) is disordered. Positions 944–981 (AMDVSSSPQSSTAEIQSQSSERPAADPISSPSLRPQED) are disordered. Polar residues predominate over residues 945 to 964 (MDVSSSPQSSTAEIQSQSSE).

The protein belongs to the GOLGA2 family.

It localises to the golgi apparatus. The protein localises to the cis-Golgi network membrane. It is found in the endoplasmic reticulum-Golgi intermediate compartment membrane. The protein resides in the cytoplasm. Its subcellular location is the cytoskeleton. It localises to the spindle pole. Functionally, peripheral membrane component of the cis-Golgi stack that acts as a membrane skeleton that maintains the structure of the Golgi apparatus, and as a vesicle thether that facilitates vesicle fusion to the Golgi membrane. Required for normal protein transport from the endoplasmic reticulum to the Golgi apparatus and the cell membrane. Plays a central role in mitotic Golgi disassembly. Also plays a key role in spindle pole assembly and centrosome organization. It probably promotes mitotic spindle pole assembly by activating assembly factors to nucleate microtubules around the Golgi and capture them to couple mitotic membranes to the spindle. Also required for the Golgi ribbon formation and glycosylation of membrane and secretory proteins. This chain is Golgin subfamily A member 2, found in Danio rerio (Zebrafish).